The sequence spans 97 residues: Non-pathogenic pore-forming peptide amoebapore A (97 aa).

A signal peptide spans 1–20 (MKAIVFVLIFAVAFAVTLRQ). Residues 21 to 97 (GPIVCNLCTG…NAICAKIHAC (77 aa)) enclose the Saposin B-type domain. Intrachain disulfides connect Cys-25/Cys-97, Cys-28/Cys-91, and Cys-55/Cys-66.

As to quaternary structure, monomer. Homodimer. Hexamer; formed during insertion in the membrane.

It localises to the cytoplasmic granule. In terms of biological role, forms pores in the cell membrane of host cells. Implicated in the cytolytic activity of the parasite. Pore forming activity is lower compared to the activity of ameobapore A from the pathogenic strain HM-1:IMSS. This Entamoeba histolytica protein is Non-pathogenic pore-forming peptide amoebapore A.